We begin with the raw amino-acid sequence, 264 residues long: Thymidylate synthase (264 aa).

DUMP is bound by residues Arg-21 and 126–127 (RR). Cys-146 (nucleophile) is an active-site residue. DUMP is bound by residues 166–169 (RSAD), Asn-177, and 207–209 (HLY). Asp-169 lines the (6R)-5,10-methylene-5,6,7,8-tetrahydrofolate pocket. Ala-263 contributes to the (6R)-5,10-methylene-5,6,7,8-tetrahydrofolate binding site.

It belongs to the thymidylate synthase family. Bacterial-type ThyA subfamily. In terms of assembly, homodimer.

It is found in the cytoplasm. It catalyses the reaction dUMP + (6R)-5,10-methylene-5,6,7,8-tetrahydrofolate = 7,8-dihydrofolate + dTMP. It functions in the pathway pyrimidine metabolism; dTTP biosynthesis. In terms of biological role, catalyzes the reductive methylation of 2'-deoxyuridine-5'-monophosphate (dUMP) to 2'-deoxythymidine-5'-monophosphate (dTMP) while utilizing 5,10-methylenetetrahydrofolate (mTHF) as the methyl donor and reductant in the reaction, yielding dihydrofolate (DHF) as a by-product. This enzymatic reaction provides an intracellular de novo source of dTMP, an essential precursor for DNA biosynthesis. In Nitrobacter hamburgensis (strain DSM 10229 / NCIMB 13809 / X14), this protein is Thymidylate synthase.